A 193-amino-acid polypeptide reads, in one-letter code: dCTP deaminase (193 aa).

DCTP contacts are provided by residues 110–115 (RSSLAR), Asp-128, 136–138 (VLE), Tyr-171, Lys-178, and Gln-182. The Proton donor/acceptor role is filled by Glu-138. Residues 169–193 (RPYNSRQDAKYRDQQGAVASRIDKD) form a disordered region.

This sequence belongs to the dCTP deaminase family. Homotrimer.

It catalyses the reaction dCTP + H2O + H(+) = dUTP + NH4(+). It participates in pyrimidine metabolism; dUMP biosynthesis; dUMP from dCTP (dUTP route): step 1/2. Functionally, catalyzes the deamination of dCTP to dUTP. The polypeptide is dCTP deaminase (Serratia proteamaculans (strain 568)).